A 222-amino-acid chain; its full sequence is Endonuclease V (222 aa).

Positions 34 and 102 each coordinate Mg(2+).

It belongs to the endonuclease V family. Mg(2+) is required as a cofactor.

It is found in the cytoplasm. The catalysed reaction is Endonucleolytic cleavage at apurinic or apyrimidinic sites to products with a 5'-phosphate.. Its function is as follows. DNA repair enzyme involved in the repair of deaminated bases. Selectively cleaves double-stranded DNA at the second phosphodiester bond 3' to a deoxyinosine leaving behind the intact lesion on the nicked DNA. This chain is Endonuclease V, found in Proteus mirabilis (strain HI4320).